Reading from the N-terminus, the 317-residue chain is Gamma-glutamyl hydrolase (317 aa).

Positions 1 to 24 (MASLGRLLCAWVLLLCGLASPGLS) are cleaved as a signal peptide. The Gamma-glutamyl hydrolase domain occupies 25–317 (GSYERGSKRP…SSFQQAYMFN (293 aa)). N46 and N100 each carry an N-linked (GlcNAc...) asparagine glycan. C133 functions as the Nucleophile in the catalytic mechanism. N-linked (GlcNAc...) asparagine glycosylation is found at N153, N162, N188, and N202. The active-site Proton donor is H243. N-linked (GlcNAc...) asparagine glycosylation occurs at N306.

The protein belongs to the peptidase C26 family. As to quaternary structure, homodimer.

The protein resides in the secreted. Its subcellular location is the extracellular space. It is found in the lysosome. It localises to the melanosome. It catalyses the reaction (6S)-5,6,7,8-tetrahydrofolyl-(gamma-L-Glu)(n) + (n-1) H2O = (6S)-5,6,7,8-tetrahydrofolate + (n-1) L-glutamate. Its activity is regulated as follows. Activity is altered by insulin and estrogen. Functionally, hydrolyzes the polyglutamate sidechains of pteroylpolyglutamates. Progressively removes gamma-glutamyl residues from pteroylpoly-gamma-glutamate to yield pteroyl-alpha-glutamate (folic acid) and free glutamate. May play an important role in the bioavailability of dietary pteroylpolyglutamates and in the metabolism of pteroylpolyglutamates and antifolates. Exhibits either endo- or exopeptidase activity depending upon the tissue of origin. When secreted, it acts primarily as an endopeptidase. The chain is Gamma-glutamyl hydrolase (Ggh) from Rattus norvegicus (Rat).